Consider the following 319-residue polypeptide: ATP-dependent 6-phosphofructokinase (319 aa).

ATP is bound at residue glycine 11. 21–25 (RAVVR) lines the ADP pocket. ATP is bound by residues 72–73 (RC) and 102–105 (GNGS). Asparagine 103 contributes to the Mg(2+) binding site. Substrate is bound at residue 125-127 (TID). The active-site Proton acceptor is the aspartate 127. Position 154 (arginine 154) interacts with ADP. Substrate is bound by residues arginine 162 and 169–171 (MGR). Residues 185–187 (GAE), arginine 211, and 213–215 (KMH) contribute to the ADP site. Substrate-binding positions include glutamate 222, arginine 243, and 249 to 252 (HIQR).

This sequence belongs to the phosphofructokinase type A (PFKA) family. ATP-dependent PFK group I subfamily. Prokaryotic clade 'B1' sub-subfamily. Homotetramer. It depends on Mg(2+) as a cofactor.

The protein localises to the cytoplasm. The enzyme catalyses beta-D-fructose 6-phosphate + ATP = beta-D-fructose 1,6-bisphosphate + ADP + H(+). Its pathway is carbohydrate degradation; glycolysis; D-glyceraldehyde 3-phosphate and glycerone phosphate from D-glucose: step 3/4. Allosterically activated by ADP and other diphosphonucleosides, and allosterically inhibited by phosphoenolpyruvate. Functionally, catalyzes the phosphorylation of D-fructose 6-phosphate to fructose 1,6-bisphosphate by ATP, the first committing step of glycolysis. In Clostridium acetobutylicum (strain ATCC 824 / DSM 792 / JCM 1419 / IAM 19013 / LMG 5710 / NBRC 13948 / NRRL B-527 / VKM B-1787 / 2291 / W), this protein is ATP-dependent 6-phosphofructokinase.